Consider the following 171-residue polypeptide: Spiderine-2a (171 aa).

Residues 1–18 (MKFALVLLGVCAFYLVNA) form the signal peptide. Residues 19–58 (TGDLETELEASELQELQEALDLIAETPLESLEAEELEEAR) constitute a propeptide, removed in mature form. The linear cationic cytotoxin domain stretch occupies residues 59–104 (KFKLPKINWGKLASKAKDVYKKGQKLAKNKNVKKALKYGKQLAENL). One can recognise an Oxytoxin-type inhibitor cystine knot (ICK) domain in the interval 118 to 171 (NNKCWAIGTRCTDDCDCCPEHHCHCPAKSWTFGLIPCSCQVTESDKVNKCPPAE). 5 cysteine pairs are disulfide-bonded: Cys121–Cys135, Cys128–Cys140, Cys132–Cys167, Cys134–Cys156, and Cys142–Cys154.

Post-translationally, disulfide bonds. Expressed by the venom gland.

Its subcellular location is the secreted. Has antimicrobial, insecticidal, cytolytic and cytotoxic activity. This is Spiderine-2a from Oxyopes takobius (Lynx spider).